We begin with the raw amino-acid sequence, 472 residues long: 3-isopropylmalate dehydratase large subunit (472 aa).

Positions 289 to 312 are disordered; sequence TWGTNPAQGTGVSQVVPSPDDAKD. Polar residues predominate over residues 290–304; sequence WGTNPAQGTGVSQVV. Residues cysteine 347, cysteine 407, and cysteine 410 each contribute to the [4Fe-4S] cluster site.

This sequence belongs to the aconitase/IPM isomerase family. LeuC type 1 subfamily. In terms of assembly, heterodimer of LeuC and LeuD. Requires [4Fe-4S] cluster as cofactor.

The catalysed reaction is (2R,3S)-3-isopropylmalate = (2S)-2-isopropylmalate. The protein operates within amino-acid biosynthesis; L-leucine biosynthesis; L-leucine from 3-methyl-2-oxobutanoate: step 2/4. Its function is as follows. Catalyzes the isomerization between 2-isopropylmalate and 3-isopropylmalate, via the formation of 2-isopropylmaleate. The chain is 3-isopropylmalate dehydratase large subunit from Halalkalibacterium halodurans (strain ATCC BAA-125 / DSM 18197 / FERM 7344 / JCM 9153 / C-125) (Bacillus halodurans).